A 208-amino-acid chain; its full sequence is N-(5'-phosphoribosyl)anthranilate isomerase (208 aa).

The protein belongs to the TrpF family.

The catalysed reaction is N-(5-phospho-beta-D-ribosyl)anthranilate = 1-(2-carboxyphenylamino)-1-deoxy-D-ribulose 5-phosphate. It participates in amino-acid biosynthesis; L-tryptophan biosynthesis; L-tryptophan from chorismate: step 3/5. This Deinococcus radiodurans (strain ATCC 13939 / DSM 20539 / JCM 16871 / CCUG 27074 / LMG 4051 / NBRC 15346 / NCIMB 9279 / VKM B-1422 / R1) protein is N-(5'-phosphoribosyl)anthranilate isomerase.